The sequence spans 196 residues: Pro-FMRFamide-related neuropeptide VF (196 aa).

The first 21 residues, 1–21 (MEIISLKRFILLMLATSSLLT), serve as a signal peptide directing secretion. Positions 22–57 (SNIFCTDESRIPSLYSKKNYDKYSEPRGDLGWEKER) are excised as a propeptide. Phenylalanine 92 carries the phenylalanine amide modification. 2 propeptides span residues 95–99 (NMEEE) and 115–121 (NREDSLS). At phenylalanine 131 the chain carries Phenylalanine amide. Positions 134–196 (TIAAKSITKT…IDDAELKQEK (63 aa)) are excised as a propeptide.

It belongs to the FARP (FMRFamide related peptide) family. Expressed in hypothalamus, where it is localized to the dorsomedial hypothalamic nucleus (DMH), paraventricular nucleus (PVN), and to neuronal projections from the PVN to the neurosecretory zone of the median eminence.

Its subcellular location is the secreted. Its function is as follows. May act in concert with kisspeptin, through opposing affects, to regulate the activity of gonadotropin-releasing hormone (GnRH) neurons across the seasons, leading to an annual change in fertility and the cyclical seasonal transition from non-breeding to breeding season. Functionally, efficiently inhibits forskolin-induced production of cAMP. Acts as a potent negative regulator of gonadotropin synthesis and secretion. Induces secretion of prolactin. In terms of biological role, efficiently inhibits forskolin-induced production of cAMP. Blocks morphine-induced analgesia. Shows no inhibitory activity of forskolin-induced production of cAMP. This is Pro-FMRFamide-related neuropeptide VF from Ovis aries (Sheep).